Here is a 288-residue protein sequence, read N- to C-terminus: Shikimate dehydrogenase (NADP(+)) (288 aa).

Shikimate-binding positions include 22–24 (SLS) and Thr69. Lys73 (proton acceptor) is an active-site residue. Shikimate contacts are provided by Asn94 and Asp110. NADP(+)-binding positions include 131 to 135 (GSGGA) and Leu228. Tyr230 provides a ligand contact to shikimate. Gly251 provides a ligand contact to NADP(+).

The protein belongs to the shikimate dehydrogenase family. In terms of assembly, homodimer.

It carries out the reaction shikimate + NADP(+) = 3-dehydroshikimate + NADPH + H(+). The protein operates within metabolic intermediate biosynthesis; chorismate biosynthesis; chorismate from D-erythrose 4-phosphate and phosphoenolpyruvate: step 4/7. Functionally, involved in the biosynthesis of the chorismate, which leads to the biosynthesis of aromatic amino acids. Catalyzes the reversible NADPH linked reduction of 3-dehydroshikimate (DHSA) to yield shikimate (SA). The chain is Shikimate dehydrogenase (NADP(+)) from Synechococcus sp. (strain JA-2-3B'a(2-13)) (Cyanobacteria bacterium Yellowstone B-Prime).